Consider the following 315-residue polypeptide: Methionyl-tRNA formyltransferase (315 aa).

113 to 116 (SLLP) is a binding site for (6S)-5,6,7,8-tetrahydrofolate.

It belongs to the Fmt family.

It carries out the reaction L-methionyl-tRNA(fMet) + (6R)-10-formyltetrahydrofolate = N-formyl-L-methionyl-tRNA(fMet) + (6S)-5,6,7,8-tetrahydrofolate + H(+). In terms of biological role, attaches a formyl group to the free amino group of methionyl-tRNA(fMet). The formyl group appears to play a dual role in the initiator identity of N-formylmethionyl-tRNA by promoting its recognition by IF2 and preventing the misappropriation of this tRNA by the elongation apparatus. The sequence is that of Methionyl-tRNA formyltransferase from Escherichia coli O17:K52:H18 (strain UMN026 / ExPEC).